The primary structure comprises 309 residues: Putative G-protein coupled receptor B0244.4 (309 aa).

6 helical membrane passes run 39–59 (SIIFWIDFLIPCTLFVVACFL), 82–102 (YIFMVSRAISALTACVIMLAL), 114–134 (IYFLFFLIDDLSFYSLLGSYV), 162–182 (FAIANLITSVVLAITTAMFQA), 204–224 (IMLVLILTSFLIPIVTLSFVL), and 256–276 (WTLFTFTLITLTEAIPSFYLV).

This sequence belongs to the G-protein coupled receptor 1 family. B0244 subfamily.

The protein resides in the cell membrane. This chain is Putative G-protein coupled receptor B0244.4, found in Caenorhabditis elegans.